An 840-amino-acid chain; its full sequence is Aconitase AMT8 (840 aa).

Aspartate 258–histidine 260 provides a ligand contact to substrate. [4Fe-4S] cluster-binding residues include cysteine 450, cysteine 513, and cysteine 516. Substrate contacts are provided by residues arginine 536, arginine 541, and serine 709 to arginine 710.

The protein belongs to the aconitase/IPM isomerase family.

It functions in the pathway mycotoxin biosynthesis. Its function is as follows. Aconitase; part of the gene clusters that mediate the biosynthesis of AM-toxins, host-selective toxins (HSTs) causing Alternaria blotch on apple, a worldwide distributed disease. AM-toxins are cyclic depsipeptides containing the 3 residues 2-hydroxy-isovaleric acid (2-HIV), dehydroalanine, L-alanine which are common for all 3 AM-toxins I to III. The fourth precursor is L-alpha-amino-methoxyphenyl-valeric acid (L-Amv) for AM-toxin I, L-alpha-amino-phenyl-valeric acid (L-Apv) for AM-toxin II, and L-alpha-amino-hydroxyphenyl-valeric acid (L-Ahv) for AM-toxin III. AM-toxins have two target sites for affecting susceptible apple cells; they cause invagination of the plasma membrane and electrolyte loss and chloroplast disorganization. The non-ribosomal peptide synthetase AMT1 contains 4 catalytic modules and is responsible for activation of each residue in AM-toxin. The aldo-keto reductase AMT2 catalyzes the conversion of 2-keto-isovaleric acid (2-KIV) to 2-hydroxy-isovaleric acid (2-HIV), one of the precursor residues incorporated by AMT1 during AM-toxin biosynthesis, by reduction of its ketone to an alcohol. The cytochrome P450 monooxygenase AMT3 and the thioesterase AMT4 are also important for AM-toxin production, but their exact function within the AM-toxin biosynthesis are not known yet. Up to 21 proteins (including AMT1 to AMT4) are predicted to be involved in AM-toxin biosynthesis since their expression ishighly up-regulated in AM-toxin-producing cultures. The chain is Aconitase AMT8 from Alternaria alternata (Alternaria rot fungus).